A 217-amino-acid chain; its full sequence is Putative threonylcarbamoyl-AMP synthase (217 aa).

One can recognise a YrdC-like domain in the interval 14 to 199; sequence SRGIVSAVGA…TPRVLRPGPV (186 aa).

This sequence belongs to the SUA5 family.

Its subcellular location is the cytoplasm. It carries out the reaction L-threonine + hydrogencarbonate + ATP = L-threonylcarbamoyladenylate + diphosphate + H2O. Required for the formation of a threonylcarbamoyl group on adenosine at position 37 (t(6)A37) in tRNAs that read codons beginning with adenine. Catalyzes the conversion of L-threonine, HCO(3)(-)/CO(2) and ATP to give threonylcarbamoyl-AMP (TC-AMP) as the acyladenylate intermediate, with the release of diphosphate. In Mycobacterium tuberculosis (strain CDC 1551 / Oshkosh), this protein is Putative threonylcarbamoyl-AMP synthase.